A 337-amino-acid polypeptide reads, in one-letter code: MQKSLITKWLCISCIMVIATLVIGGITRLTGSGLSIVEWRPVTGILPPFSFESWQSEFAKYKAFPEYNSVNYGITLSQFKFIYLLEFIHRLLGRITALIYIVPLIYFYFKDVIKNRDMLPYIIALLLFCVQGFIGWYMVKSGLLNSPYVSHFRLAFHLIIAVIIYHILFYQLIKNRCDILLIPSQTDFKLPLIFSGIAITVVYVQIFLGALVAGLDAGLIYNSFPLMDDRFIPMEIKDNFFDLKNWYDPVFIQFIHRLVGYSVFLVVVVLISCLLKIEHPKLNKIAYFLMIALFMQVSTGILTLLYSVPIIIASIHQLFAIILLSIIIWCYFLIKSS.

Transmembrane regions (helical) follow at residues 6-26 (ITKW…IGGI), 87-107 (FIHR…LIYF), 119-139 (LPYI…WYMV), 154-174 (LAFH…QLIK), and 192-212 (LIFS…GALV). Histidine 256 serves as a coordination point for heme. 3 helical membrane-spanning segments follow: residues 258-278 (LVGY…LKIE), 285-305 (IAYF…LTLL), and 308-328 (VPII…SIII). Histidine 316 provides a ligand contact to heme.

It belongs to the COX15/CtaA family. Type 2 subfamily. In terms of assembly, interacts with CtaB. Requires heme b as cofactor.

The protein resides in the cell membrane. The catalysed reaction is Fe(II)-heme o + 2 A + H2O = Fe(II)-heme a + 2 AH2. It functions in the pathway porphyrin-containing compound metabolism; heme A biosynthesis; heme A from heme O: step 1/1. In terms of biological role, catalyzes the conversion of heme O to heme A by two successive hydroxylations of the methyl group at C8. The first hydroxylation forms heme I, the second hydroxylation results in an unstable dihydroxymethyl group, which spontaneously dehydrates, resulting in the formyl group of heme A. This chain is Heme A synthase, found in Rickettsia conorii (strain ATCC VR-613 / Malish 7).